Reading from the N-terminus, the 269-residue chain is Gap junction gamma-3 protein (269 aa).

Residues 1–33 (MLLLELPIKCRMCGRFLRQLLAQESQHSTPVGR) are Extracellular-facing. A helical transmembrane segment spans residues 34–54 (FLLPMLMGFRLLILVSSGPGV). At 55–86 (FGNDENEFICHLGQPGCKTICYDVFRPLSPLR) the chain is on the cytoplasmic side. Residues 87–107 (FWAFQVILMAVPSAIYVAFTL) traverse the membrane as a helical segment. Residues 108–145 (YHVIGYWEVPGKENKEQETQISKGDHSKDVSGAKSLKL) are Extracellular-facing. A helical membrane pass occupies residues 146 to 166 (LWAYVAHLGVRLALEGAALGV). The Cytoplasmic portion of the chain corresponds to 167 to 205 (QYNLYGFKMSSTFICREDPCIGSTTCFQSHPSEKTIFLN). Residues 206–226 (IMFGISGACFLFIFLELALLG) form a helical membrane-spanning segment. Residues 227–269 (LGRFWRIYKHKLSFLKKLPTSESSVRSKDTTDELSVVEAKEPF) lie on the Extracellular side of the membrane. Phosphoserine is present on serine 261.

It belongs to the connexin family. Gamma-type subfamily. A connexon is composed of a hexamer of connexins. In terms of tissue distribution, CNS specific. Expression is restricted to brain, spinal cord, and sciatic nerve.

It localises to the cell membrane. The protein resides in the cell junction. Its subcellular location is the gap junction. In terms of biological role, one gap junction consists of a cluster of closely packed pairs of transmembrane channels, the connexons, through which materials of low MW diffuse from one cell to a neighboring cell. In Mus musculus (Mouse), this protein is Gap junction gamma-3 protein (Gjc3).